A 227-amino-acid chain; its full sequence is ATP-dependent dethiobiotin synthetase BioD (227 aa).

12–17 (DVGKTV) is an ATP binding site. T16 lines the Mg(2+) pocket. The active site involves K37. T41 lines the substrate pocket. ATP contacts are provided by residues D50, 110–113 (EGAG), 171–172 (GS), and 201–203 (PAG). Mg(2+) is bound by residues D50 and E110.

This sequence belongs to the dethiobiotin synthetase family. Homodimer. Mg(2+) is required as a cofactor.

Its subcellular location is the cytoplasm. It carries out the reaction (7R,8S)-7,8-diammoniononanoate + CO2 + ATP = (4R,5S)-dethiobiotin + ADP + phosphate + 3 H(+). It participates in cofactor biosynthesis; biotin biosynthesis; biotin from 7,8-diaminononanoate: step 1/2. Catalyzes a mechanistically unusual reaction, the ATP-dependent insertion of CO2 between the N7 and N8 nitrogen atoms of 7,8-diaminopelargonic acid (DAPA, also called 7,8-diammoniononanoate) to form a ureido ring. In Rhodococcus erythropolis (strain PR4 / NBRC 100887), this protein is ATP-dependent dethiobiotin synthetase BioD.